Reading from the N-terminus, the 389-residue chain is S-adenosylmethionine synthase (389 aa).

His15 contributes to the ATP binding site. Asp17 contacts Mg(2+). K(+) is bound at residue Glu43. L-methionine-binding residues include Glu56 and Gln99. Positions 99–109 (QSPDIAQGVNE) are flexible loop. ATP contacts are provided by residues 166–168 (DAK), 234–235 (RF), Asp243, 249–250 (RK), Ala266, and Lys270. Position 243 (Asp243) interacts with L-methionine. L-methionine is bound at residue Lys274.

Belongs to the AdoMet synthase family. Homotetramer; dimer of dimers. Requires Mg(2+) as cofactor. K(+) serves as cofactor.

The protein localises to the cytoplasm. The enzyme catalyses L-methionine + ATP + H2O = S-adenosyl-L-methionine + phosphate + diphosphate. Its pathway is amino-acid biosynthesis; S-adenosyl-L-methionine biosynthesis; S-adenosyl-L-methionine from L-methionine: step 1/1. Functionally, catalyzes the formation of S-adenosylmethionine (AdoMet) from methionine and ATP. The overall synthetic reaction is composed of two sequential steps, AdoMet formation and the subsequent tripolyphosphate hydrolysis which occurs prior to release of AdoMet from the enzyme. The chain is S-adenosylmethionine synthase from Neisseria gonorrhoeae (strain NCCP11945).